We begin with the raw amino-acid sequence, 91 residues long: Large ribosomal subunit protein bL27 (91 aa).

The protein belongs to the bacterial ribosomal protein bL27 family.

This is Large ribosomal subunit protein bL27 from Chromobacterium violaceum (strain ATCC 12472 / DSM 30191 / JCM 1249 / CCUG 213 / NBRC 12614 / NCIMB 9131 / NCTC 9757 / MK).